Reading from the N-terminus, the 365-residue chain is UDP-N-acetylglucosamine--N-acetylmuramyl-(pentapeptide) pyrophosphoryl-undecaprenol N-acetylglucosamine transferase (365 aa).

Residues Thr-11 to Gly-13, Asn-124, Arg-165, Ser-192, Ile-246, and Gln-291 contribute to the UDP-N-acetyl-alpha-D-glucosamine site.

This sequence belongs to the glycosyltransferase 28 family. MurG subfamily.

It is found in the cell inner membrane. The catalysed reaction is di-trans,octa-cis-undecaprenyl diphospho-N-acetyl-alpha-D-muramoyl-L-alanyl-D-glutamyl-meso-2,6-diaminopimeloyl-D-alanyl-D-alanine + UDP-N-acetyl-alpha-D-glucosamine = di-trans,octa-cis-undecaprenyl diphospho-[N-acetyl-alpha-D-glucosaminyl-(1-&gt;4)]-N-acetyl-alpha-D-muramoyl-L-alanyl-D-glutamyl-meso-2,6-diaminopimeloyl-D-alanyl-D-alanine + UDP + H(+). It functions in the pathway cell wall biogenesis; peptidoglycan biosynthesis. Functionally, cell wall formation. Catalyzes the transfer of a GlcNAc subunit on undecaprenyl-pyrophosphoryl-MurNAc-pentapeptide (lipid intermediate I) to form undecaprenyl-pyrophosphoryl-MurNAc-(pentapeptide)GlcNAc (lipid intermediate II). The polypeptide is UDP-N-acetylglucosamine--N-acetylmuramyl-(pentapeptide) pyrophosphoryl-undecaprenol N-acetylglucosamine transferase (Nitratidesulfovibrio vulgaris (strain ATCC 29579 / DSM 644 / CCUG 34227 / NCIMB 8303 / VKM B-1760 / Hildenborough) (Desulfovibrio vulgaris)).